We begin with the raw amino-acid sequence, 289 residues long: ATP phosphoribosyltransferase (289 aa).

This sequence belongs to the ATP phosphoribosyltransferase family. Long subfamily. Mg(2+) is required as a cofactor.

It is found in the cytoplasm. It catalyses the reaction 1-(5-phospho-beta-D-ribosyl)-ATP + diphosphate = 5-phospho-alpha-D-ribose 1-diphosphate + ATP. The protein operates within amino-acid biosynthesis; L-histidine biosynthesis; L-histidine from 5-phospho-alpha-D-ribose 1-diphosphate: step 1/9. Feedback inhibited by histidine. Its function is as follows. Catalyzes the condensation of ATP and 5-phosphoribose 1-diphosphate to form N'-(5'-phosphoribosyl)-ATP (PR-ATP). Has a crucial role in the pathway because the rate of histidine biosynthesis seems to be controlled primarily by regulation of HisG enzymatic activity. The sequence is that of ATP phosphoribosyltransferase from Desulforudis audaxviator (strain MP104C).